The primary structure comprises 819 residues: DNA topoisomerase 4 subunit A (819 aa).

The Topo IIA-type catalytic domain occupies 30-496 (LPDIRDGLKP…QIIEIDTASL (467 aa)). The active-site O-(5'-phospho-DNA)-tyrosine intermediate is the Tyr-118.

The protein belongs to the type II topoisomerase GyrA/ParC subunit family. ParC type 2 subfamily. In terms of assembly, heterotetramer composed of ParC and ParE.

It is found in the cell membrane. The catalysed reaction is ATP-dependent breakage, passage and rejoining of double-stranded DNA.. Its function is as follows. Topoisomerase IV is essential for chromosome segregation. It relaxes supercoiled DNA. Performs the decatenation events required during the replication of a circular DNA molecule. This Streptococcus pyogenes serotype M3 (strain SSI-1) protein is DNA topoisomerase 4 subunit A.